We begin with the raw amino-acid sequence, 328 residues long: DNA repair and recombination protein RadA (328 aa).

118-125 (GEYGSGKT) contributes to the ATP binding site.

It belongs to the eukaryotic RecA-like protein family.

In terms of biological role, involved in DNA repair and in homologous recombination. Binds and assemble on single-stranded DNA to form a nucleoprotein filament. Hydrolyzes ATP in a ssDNA-dependent manner and promotes DNA strand exchange between homologous DNA molecules. The chain is DNA repair and recombination protein RadA from Desulfurococcus amylolyticus (strain DSM 18924 / JCM 16383 / VKM B-2413 / 1221n) (Desulfurococcus kamchatkensis).